The chain runs to 105 residues: Large ribosomal subunit protein uL24 (105 aa).

This sequence belongs to the universal ribosomal protein uL24 family. As to quaternary structure, part of the 50S ribosomal subunit.

One of two assembly initiator proteins, it binds directly to the 5'-end of the 23S rRNA, where it nucleates assembly of the 50S subunit. In terms of biological role, one of the proteins that surrounds the polypeptide exit tunnel on the outside of the subunit. The chain is Large ribosomal subunit protein uL24 from Xanthomonas campestris pv. campestris (strain 8004).